Reading from the N-terminus, the 372-residue chain is 3 beta-hydroxysteroid dehydrogenase/Delta 5--&gt;4-isomerase type 2 (372 aa).

Tyr154 acts as the Proton acceptor in catalysis. NAD(+) is bound at residue Lys158. Residues 287 to 307 (LTLMYWIGFLLEVVSFLLSPI) traverse the membrane as a helical segment.

The protein belongs to the 3-beta-HSD family. In terms of tissue distribution, expressed in adrenal gland, testis and ovary.

It localises to the endoplasmic reticulum membrane. The protein localises to the mitochondrion membrane. The catalysed reaction is a 3beta-hydroxy-Delta(5)-steroid + NAD(+) = a 3-oxo-Delta(5)-steroid + NADH + H(+). It carries out the reaction a 3-oxo-Delta(5)-steroid = a 3-oxo-Delta(4)-steroid. The enzyme catalyses pregnenolone + NAD(+) = pregn-5-ene-3,20-dione + NADH + H(+). It catalyses the reaction pregn-5-ene-3,20-dione = progesterone. The catalysed reaction is 3beta-hydroxyandrost-5-en-17-one + NAD(+) = androst-5-ene-3,17-dione + NADH + H(+). It carries out the reaction androst-5-ene-3,17-dione = androst-4-ene-3,17-dione. It functions in the pathway lipid metabolism; steroid biosynthesis. Its function is as follows. 3-beta-HSD is a bifunctional enzyme, that catalyzes the oxidative conversion of Delta(5)-ene-3-beta-hydroxy steroid, and the oxidative conversion of ketosteroids. The 3-beta-HSD enzymatic system plays a crucial role in the biosynthesis of all classes of hormonal steroids. The sequence is that of 3 beta-hydroxysteroid dehydrogenase/Delta 5--&gt;4-isomerase type 2 from Homo sapiens (Human).